Here is a 320-residue protein sequence, read N- to C-terminus: MKHTNSKQKLKDIINFCQAIFTLCIICLYQANISNSYPIYAQQTYENPRESTGRIVCANCHLAQKNIYIEAPKEVLPNTVFETVVKIPYEFNKKQILGNGSKGDLNVGAVVILPEGFKLAPKDRMDEKLLKKTKNLYFNNYSQKLDNIIVIGPITGKDNQEITFPILAPDPQINKNTHFLKYSIYVGANKGRGQLYPSGEKSNNNPIPSNAEGRIEKIKPNEDGGYEVIIKTKDDETISQYVPIGLNLTIKEGQRIKAGEYITTDPNVGGFGQSEIEIVLQNPTRLISFIFFSISVLISQLFFVLKKKQFEKVQSLNQNF.

A signal peptide spans 1–36 (MKHTNSKQKLKDIINFCQAIFTLCIICLYQANISNS). Heme contacts are provided by tyrosine 37, cysteine 57, cysteine 60, and histidine 61. A helical membrane pass occupies residues 286-305 (LISFIFFSISVLISQLFFVL).

It belongs to the cytochrome f family. In terms of assembly, the 4 large subunits of the cytochrome b6-f complex are cytochrome b6, subunit IV (17 kDa polypeptide, petD), cytochrome f and the Rieske protein, while the 4 small subunits are PetG, PetL, PetM and PetN. The complex functions as a dimer. Requires heme as cofactor.

The protein resides in the plastid. Its subcellular location is the chloroplast thylakoid membrane. In terms of biological role, component of the cytochrome b6-f complex, which mediates electron transfer between photosystem II (PSII) and photosystem I (PSI), cyclic electron flow around PSI, and state transitions. The chain is Cytochrome f (petA) from Cyanidium caldarium (Red alga).